Reading from the N-terminus, the 576-residue chain is Sodium/hydrogen exchanger 8 (576 aa).

The next 11 helical transmembrane spans lie at 55-75 (MTIF…HLLI), 79-99 (LHFL…GAVI), 118-138 (PNMF…YSLH), 151-171 (LFAV…IYFL), 186-206 (FAFG…IFNA), 256-276 (LGYF…TGLI), 306-326 (GLAE…GIVM), 349-369 (VAFL…FSFP), 374-394 (ISFV…NIFP), 412-432 (MFIM…SLHL), and 446-466 (TTIV…MPLI). Threonine 505 bears the Phosphothreonine mark. Serine 566 and serine 568 each carry phosphoserine.

This sequence belongs to the monovalent cation:proton antiporter 1 (CPA1) transporter (TC 2.A.36) family. As to expression, predominantly expressed in the liver, skeletal muscle, kidney, and testis. Expressed in both renal cortex and medulla. Detected throughout the entire gastrointestinal tract, with high expression detected in stomach, duodenum and ascending colon. In gastric epithelium; expressed in the glands within the fundus and pylorus regions.

It is found in the golgi apparatus membrane. Its subcellular location is the golgi apparatus. The protein localises to the trans-Golgi network membrane. It localises to the endosome. The protein resides in the multivesicular body membrane. It is found in the apical cell membrane. Its subcellular location is the cytoplasmic vesicle. The protein localises to the secretory vesicle. It localises to the acrosome. The catalysed reaction is Na(+)(in) + H(+)(out) = Na(+)(out) + H(+)(in). Functionally, na(+)/H(+) antiporter. Mediates the electoneutral exchange of intracellular H(+) ions for extracellular Na(+) in 1:1 stoichiometry. Acts as an Na(+)/H(+) exchanger in the trans-Golgi. Contributes to the regulation of pH regulation of Golgi apparatus, and consequently, in protein trafficking and endosomal morphology. Plays a crucial role in germ cells in acrosome biogenesis and sperm development, probably by playing a role in the fusion of the Golgi-derived vesicles that form the acrosomal cap. Can also be active at the cell surface of specialized cells. In the small intestine, plays a major physiological role in transepithelial absorption of Na(+). Regulates intracellular pH homeostasis of intestinal epithelial cells. Acts as an important regulator of mucosal integrity in the intestine and in the stomach, could mediate the pH fluctuation necessary for mucin exocytosis or assist membrane trafficking of other proteins. Plays a role in photoreceptor survival and in the maintenance of intracellular pH homeostasis in retinal pigment epithelium (RPE cells). The sequence is that of Sodium/hydrogen exchanger 8 (Slc9a8) from Mus musculus (Mouse).